A 355-amino-acid polypeptide reads, in one-letter code: Anthranilate phosphoribosyltransferase (355 aa).

Residues G99, 102–103 (GD), T107, 109–112 (NIST), 127–135 (KHGNRSVSS), and S139 each bind 5-phospho-alpha-D-ribose 1-diphosphate. G99 contacts anthranilate. S111 is a Mg(2+) binding site. N130 contributes to the anthranilate binding site. R185 provides a ligand contact to anthranilate. Positions 243 and 244 each coordinate Mg(2+).

The protein belongs to the anthranilate phosphoribosyltransferase family. Homodimer. The cofactor is Mg(2+).

The enzyme catalyses N-(5-phospho-beta-D-ribosyl)anthranilate + diphosphate = 5-phospho-alpha-D-ribose 1-diphosphate + anthranilate. The protein operates within amino-acid biosynthesis; L-tryptophan biosynthesis; L-tryptophan from chorismate: step 2/5. In terms of biological role, catalyzes the transfer of the phosphoribosyl group of 5-phosphorylribose-1-pyrophosphate (PRPP) to anthranilate to yield N-(5'-phosphoribosyl)-anthranilate (PRA). In Pseudoalteromonas translucida (strain TAC 125), this protein is Anthranilate phosphoribosyltransferase.